The chain runs to 456 residues: Anthranilate synthase component 1 (456 aa).

L-tryptophan is bound by residues Ser31 and 244–246 (SYM). Residue 279–280 (GT) participates in chorismate binding. Glu306 is a binding site for Mg(2+). Chorismate-binding positions include Tyr394, Arg414, 428 to 430 (GAG), and Gly430. Mg(2+) is bound at residue Glu443.

It belongs to the anthranilate synthase component I family. As to quaternary structure, heterotetramer consisting of two non-identical subunits: a beta subunit (TrpG) and a large alpha subunit (TrpE). Requires Mg(2+) as cofactor.

It catalyses the reaction chorismate + L-glutamine = anthranilate + pyruvate + L-glutamate + H(+). The protein operates within amino-acid biosynthesis; L-tryptophan biosynthesis; L-tryptophan from chorismate: step 1/5. Its activity is regulated as follows. Feedback inhibited by tryptophan. Part of a heterotetrameric complex that catalyzes the two-step biosynthesis of anthranilate, an intermediate in the biosynthesis of L-tryptophan. In the first step, the glutamine-binding beta subunit (TrpG) of anthranilate synthase (AS) provides the glutamine amidotransferase activity which generates ammonia as a substrate that, along with chorismate, is used in the second step, catalyzed by the large alpha subunit of AS (TrpE) to produce anthranilate. In the absence of TrpG, TrpE can synthesize anthranilate directly from chorismate and high concentrations of ammonia. The chain is Anthranilate synthase component 1 (trpE) from Lactococcus lactis subsp. lactis (strain IL1403) (Streptococcus lactis).